Consider the following 231-residue polypeptide: N-acetylmuramate alpha-1-phosphate uridylyltransferase (231 aa).

UTP is bound by residues 11-13 and lysine 23; that span reads GER. Asparagine 106 provides a ligand contact to substrate. A Mg(2+)-binding site is contributed by aspartate 108. 2 residues coordinate substrate: aspartate 146 and aspartate 213. Aspartate 213 provides a ligand contact to Mg(2+).

The protein belongs to the nucleotidyltransferase MurU family. In terms of assembly, monomer. It depends on Mg(2+) as a cofactor.

The catalysed reaction is N-acetyl-alpha-D-muramate 1-phosphate + UDP + H(+) = UDP-N-acetyl-alpha-D-muramate + phosphate. Its pathway is cell wall biogenesis; peptidoglycan recycling. Functionally, catalyzes the formation of UDP-N-acetylmuramate (UDP-MurNAc), a crucial precursor of the bacterial peptidoglycan cell wall, from UTP and MurNAc-alpha-1P. Is likely involved in peptidoglycan recycling as part of a cell wall recycling pathway that bypasses de novo biosynthesis of the peptidoglycan precursor UDP-MurNAc. Is able to complement the fosfomycin sensitivity phenotype of a P.putida mutant lacking murU. The polypeptide is N-acetylmuramate alpha-1-phosphate uridylyltransferase (Neisseria meningitidis serogroup B (strain ATCC BAA-335 / MC58)).